The sequence spans 251 residues: Azurocidin (251 aa).

Residues 1–19 form the signal peptide; sequence MTRLTVLALLAGLLASSRA. Positions 20–26 are cleaved as a propeptide — removed in mature form; it reads GSSPLLD. Residues 25 to 26 constitute a propeptide, dipeptide found in non-mature form; sequence LD. The Peptidase S1 domain maps to 27 to 244; it reads IVGGRKARPR…FRDWIDGVLN (218 aa). The segment at 46–70 is possesses antibiotic activity; the sequence is NQGRHFCGGALIHARFVMTAASCFQ. The cysteines at positions 52 and 68 are disulfide-linked. A glycan (N-linked (GlcNAc...) asparagine; partial) is linked at asparagine 126. Asparagine 140 carries N-linked (GlcNAc...) asparagine glycosylation. 3 disulfide bridges follow: cysteine 149/cysteine 207, cysteine 180/cysteine 186, and cysteine 197/cysteine 222. Asparagine 171 carries N-linked (GlcNAc...) asparagine; partial glycosylation. Positions 249 to 251 are cleaved as a propeptide — removed in mature form; it reads GPA.

The protein belongs to the peptidase S1 family. Elastase subfamily. Cleavage of the N-terminal propeptide which is composed of 7 amino acids occurs in two steps. The initial cleavage of 5 amino acids is followed by the cleavage of a dipeptide to produce the mature form.

Its subcellular location is the cytoplasmic granule membrane. In terms of biological role, this is a neutrophil granule-derived antibacterial and monocyte- and fibroblast-specific chemotactic glycoprotein. Binds heparin. The cytotoxic action is limited to many species of Gram-negative bacteria; this specificity may be explained by a strong affinity of the very basic N-terminal half for the negatively charged lipopolysaccharides that are unique to the Gram-negative bacterial outer envelope. It may play a role in mediating recruitment of monocytes in the second wave of inflammation. Has antibacterial activity against the Gram-negative bacterium P.aeruginosa, this activity is inhibited by LPS from P.aeruginosa. Acting alone, it does not have antimicrobial activity against the Gram-negative bacteria A.actinomycetemcomitans ATCC 29532, A.actinomycetemcomitans NCTC 9709, A.actinomycetemcomitans FDC-Y4, H.aphrophilus ATCC 13252, E.corrodens ATCC 23834, C.sputigena ATCC 33123, Capnocytophaga sp ATCC 33124, Capnocytophaga sp ATCC 27872 or E.coli ML-35. Has antibacterial activity against C.sputigena ATCC 33123 when acting synergistically with either elastase or cathepsin G. The sequence is that of Azurocidin from Homo sapiens (Human).